Reading from the N-terminus, the 430-residue chain is Probable GPI-anchored adhesin-like protein PGA32 (430 aa).

The signal sequence occupies residues 1–16 (MKVSTLIIVSIPIVSG). Disordered regions lie at residues 88-195 (LGQV…TVIN), 232-257 (IASA…RGIK), 278-302 (GGNG…SKYF), and 314-336 (SKSI…SSTD). 2 stretches are compositionally biased toward low complexity: residues 92 to 112 (TTPS…PTTS) and 122 to 135 (TDTA…TNAR). The span at 141–167 (TPVTVSGDNVLTLFGNPNLSTGNDQSN) shows a compositional bias: polar residues. Composition is skewed to low complexity over residues 168-187 (SVSK…SSSS) and 233-253 (ASAS…SSSA). Residues 289–302 (YKNHSTTSTTSKYF) show a composition bias toward polar residues. Low complexity predominate over residues 314-335 (SKSIYSNSTTSRSSLSVSSSST). The GPI-anchor amidated glycine moiety is linked to residue Gly-401. Positions 402–430 (DGNKLIGGNKYLISFMWTNLILTMIMLFT) are cleaved as a propeptide — removed in mature form.

The protein localises to the cell membrane. Putative adhesin which is involved in cell adhesion and virulence. This is Probable GPI-anchored adhesin-like protein PGA32 (PGA32) from Candida albicans (strain SC5314 / ATCC MYA-2876) (Yeast).